Here is a 307-residue protein sequence, read N- to C-terminus: DNA damage tolerance protein rad31 (307 aa).

Could be involved in a ubiquitin-related process important for DNA damage tolerance. Acts in a process which is defective in the checkpoint rad mutants and which involves hus5. The sequence is that of DNA damage tolerance protein rad31 (rad31) from Schizosaccharomyces pombe (strain 972 / ATCC 24843) (Fission yeast).